The sequence spans 395 residues: DNA primase small subunit PriS (395 aa).

Active-site residues include Asp95, Asp97, and Asp302.

This sequence belongs to the eukaryotic-type primase small subunit family. As to quaternary structure, heterodimer of a small subunit (PriS) and a large subunit (PriL). Mg(2+) is required as a cofactor. Requires Mn(2+) as cofactor.

Its function is as follows. Catalytic subunit of DNA primase, an RNA polymerase that catalyzes the synthesis of short RNA molecules used as primers for DNA polymerase during DNA replication. The small subunit contains the primase catalytic core and has DNA synthesis activity on its own. Binding to the large subunit stabilizes and modulates the activity, increasing the rate of DNA synthesis while decreasing the length of the DNA fragments, and conferring RNA synthesis capability. The DNA polymerase activity may enable DNA primase to also catalyze primer extension after primer synthesis. May also play a role in DNA repair. This is DNA primase small subunit PriS from Methanothrix thermoacetophila (strain DSM 6194 / JCM 14653 / NBRC 101360 / PT) (Methanosaeta thermophila).